The sequence spans 154 residues: Egg-lysin (154 aa).

A signal peptide spans 1-18 (MKLLVLWVFAMMATVAMS).

Monomer. Homodimer. Molecules associate into dimers and then rapidly dissociate again. Interacts (as a monomer) with the egg vitelline layer protein VERL (via VERL repeats); each VERL chain can bind multiple copies of lysin. Sperm.

The protein resides in the cytoplasmic vesicle. It is found in the secretory vesicle. It localises to the acrosome lumen. In terms of biological role, creates a 3 um hole in the egg vitelline layer through which the sperm passes. Does not have enzyme activity. Species-specific interaction between the sperm protein lysin and the egg protein VERL exposes a basic surface on lysin that may dissociate the egg vitelline layer via electrostatic repulsion. Plays a role in ensuring species-specific fertilization. The sequence is that of Egg-lysin from Haliotis fulgens (Green abalone).